The primary structure comprises 120 residues: Small ribosomal subunit protein uS13 (120 aa).

The interval 92–120 (HRKGLPVRGQTTKNNARTRKGKKKTVGSK) is disordered. Over residues 107 to 120 (ARTRKGKKKTVGSK) the composition is skewed to basic residues.

Belongs to the universal ribosomal protein uS13 family. Part of the 30S ribosomal subunit. Forms a loose heterodimer with protein S19. Forms two bridges to the 50S subunit in the 70S ribosome.

Located at the top of the head of the 30S subunit, it contacts several helices of the 16S rRNA. In the 70S ribosome it contacts the 23S rRNA (bridge B1a) and protein L5 of the 50S subunit (bridge B1b), connecting the 2 subunits; these bridges are implicated in subunit movement. Contacts the tRNAs in the A and P-sites. The sequence is that of Small ribosomal subunit protein uS13 from Helicobacter pylori (strain J99 / ATCC 700824) (Campylobacter pylori J99).